The sequence spans 222 residues: Adenylate kinase (222 aa).

An ATP-binding site is contributed by 10–15; it reads GAGKGT. The NMP stretch occupies residues 30–59; it reads STGDMLRAAVKAGTPLGIEAKKVMDAGGLV. AMP is bound by residues Thr-31, Arg-36, 57-59, 85-88, and Gln-92; these read GLV and GFPR. Residues 122 to 159 form an LID region; that stretch reads GRRVHVASGRTYHVKYNPPKNEGQDDETGDPLIQRDDD. ATP-binding positions include Arg-123 and 132 to 133; that span reads TY. The interval 135–162 is disordered; that stretch reads VKYNPPKNEGQDDETGDPLIQRDDDKEE. Positions 156 and 167 each coordinate AMP. Gly-207 contacts ATP.

This sequence belongs to the adenylate kinase family. Monomer.

It localises to the cytoplasm. The catalysed reaction is AMP + ATP = 2 ADP. It functions in the pathway purine metabolism; AMP biosynthesis via salvage pathway; AMP from ADP: step 1/1. Functionally, catalyzes the reversible transfer of the terminal phosphate group between ATP and AMP. Plays an important role in cellular energy homeostasis and in adenine nucleotide metabolism. This Ralstonia nicotianae (strain ATCC BAA-1114 / GMI1000) (Ralstonia solanacearum) protein is Adenylate kinase.